The following is a 502-amino-acid chain: ATP synthase subunit alpha (502 aa).

170-177 lines the ATP pocket; sequence GDRKTGKT.

It belongs to the ATPase alpha/beta chains family. In terms of assembly, F-type ATPases have 2 components, CF(1) - the catalytic core - and CF(0) - the membrane proton channel. CF(1) has five subunits: alpha(3), beta(3), gamma(1), delta(1), epsilon(1). CF(0) has four main subunits: a, b, b' and c.

It localises to the cellular thylakoid membrane. It catalyses the reaction ATP + H2O + 4 H(+)(in) = ADP + phosphate + 5 H(+)(out). Its function is as follows. Produces ATP from ADP in the presence of a proton gradient across the membrane. The alpha chain is a regulatory subunit. In Microcystis aeruginosa (strain NIES-843 / IAM M-2473), this protein is ATP synthase subunit alpha.